The chain runs to 198 residues: GTP-binding protein Di-Ras1 (198 aa).

GTP-binding positions include 17-22 (GVGKSS), 33-39 (RDTYIPT), 61-65 (DTTGS), 121-125 (NKCDE), A151, and 151-152 (AK). Positions 36 to 44 (YIPTIEDTY) match the Effector region motif. Residues 178–192 (DGKRSGKQKRTDRVK) are compositionally biased toward basic and acidic residues. The disordered stretch occupies residues 178–198 (DGKRSGKQKRTDRVKGKCTLM). C195 bears the Cysteine methyl ester mark. C195 is lipidated: S-geranylgeranyl cysteine. Positions 196-198 (TLM) are cleaved as a propeptide — removed in mature form.

It belongs to the small GTPase superfamily. Di-Ras family. As to expression, highly expressed in heart and brain.

It localises to the cell membrane. In terms of biological role, displays low GTPase activity and exists predominantly in the GTP-bound form. This Homo sapiens (Human) protein is GTP-binding protein Di-Ras1 (DIRAS1).